The following is a 627-amino-acid chain: Ski protein homolog (627 aa).

Polar residues predominate over residues 1–12 (MSDSPIGSSQQV). 3 disordered regions span residues 1 to 22 (MSDSPIGSSQQVEPEHRTPDLM), 34 to 58 (LHEETRSDDDDDGQPSTSAKRKDSR), and 299 to 318 (EYDEAAPHQAPPKRPAMETP).

The protein belongs to the SKI family. May interact with daf-3. Expressed in ganglia in the head and tail and in the anterior pharynx.

The protein localises to the nucleus. Its function is as follows. Probable component of transcriptional regulatory complex with SMAD protein daf-3. Required to regulate entry into a developmentally arrested larval state known as dauer, in response to harsh environmental conditions. Involved in larvae undergoing cell-cycle arrest during the dauer stage. This chain is Ski protein homolog, found in Caenorhabditis elegans.